We begin with the raw amino-acid sequence, 1164 residues long: Protein PLASTID MOVEMENT IMPAIRED 1-RELATED 1 (1164 aa).

Positions K30–E54 are disordered. Residues A37–N51 show a composition bias toward polar residues. Residues I69–V217 form the C2 NT-type domain. Polar residues predominate over residues P224 to S263. Disordered regions lie at residues P224–Y268, A466–A486, S1038–E1063, and G1124–K1164. Composition is skewed to basic and acidic residues over residues E469–A486 and S1052–E1062.

It localises to the cytoplasm. Its function is as follows. Together with PMI1, necessary for chloroplast and nuclear photorelocation movements via the regulation of chloroplast-actin (cp-actin) filaments in pavement cells. The polypeptide is Protein PLASTID MOVEMENT IMPAIRED 1-RELATED 1 (Arabidopsis thaliana (Mouse-ear cress)).